The sequence spans 145 residues: MMIEIIPKISIPKNGLGSFTRPCRRIEFSYCNWGGSSKGMKEFLSTKLESLAKESQDVEFHVTNRQGKHPLIRAYYNTGREKVICTRKMSASSIFQKAILCRDSDGLKPRLIKYPVESTNPSVRGIWSPFSDQAKPHEIYKKKSP.

The protein belongs to the mitochondrion-specific ribosomal protein mL43 family. In terms of assembly, component of the mitochondrial large ribosomal subunit (mt-LSU). Mature yeast 74S mitochondrial ribosomes consist of a small (37S) and a large (54S) subunit. The 37S small subunit contains a 15S ribosomal RNA (15S mt-rRNA) and at least 32 different proteins. The 54S large subunit contains a 21S rRNA (21S mt-rRNA) and at least 45 different proteins.

The protein localises to the mitochondrion. In terms of biological role, component of the mitochondrial ribosome (mitoribosome), a dedicated translation machinery responsible for the synthesis of mitochondrial genome-encoded proteins, including at least some of the essential transmembrane subunits of the mitochondrial respiratory chain. The mitoribosomes are attached to the mitochondrial inner membrane and translation products are cotranslationally integrated into the membrane. Also has an extraribosomal function, being essential for mitochondrial genome integrity. May interact with MHR1 to take part in the mtDNA repair mechanism. This is Large ribosomal subunit protein mL43 (mrpl51) from Schizosaccharomyces pombe (strain 972 / ATCC 24843) (Fission yeast).